The chain runs to 360 residues: DNA replication and repair protein RecF (360 aa).

An ATP-binding site is contributed by 30–37; that stretch reads GHNGSGKT.

Belongs to the RecF family.

It localises to the cytoplasm. In terms of biological role, the RecF protein is involved in DNA metabolism; it is required for DNA replication and normal SOS inducibility. RecF binds preferentially to single-stranded, linear DNA. It also seems to bind ATP. This chain is DNA replication and repair protein RecF, found in Shewanella amazonensis (strain ATCC BAA-1098 / SB2B).